Reading from the N-terminus, the 520-residue chain is Cholesterol side-chain cleavage enzyme, mitochondrial (520 aa).

The N-terminal 36 residues, 1–36 (MLAKGLSLRSVLAKGCQPFLSPTWQSSVLATGGGAN), are a transit peptide targeting the mitochondrion. Cys-458 lines the heme pocket.

This sequence belongs to the cytochrome P450 family. In terms of assembly, interacts with FDX1/adrenodoxin. Requires heme as cofactor.

It localises to the mitochondrion inner membrane. The catalysed reaction is 6 reduced [adrenodoxin] + cholesterol + 3 O2 + 6 H(+) = 4-methylpentanal + pregnenolone + 6 oxidized [adrenodoxin] + 4 H2O. It catalyses the reaction 2 reduced [adrenodoxin] + cholesterol + O2 + 2 H(+) = (22R)-hydroxycholesterol + 2 oxidized [adrenodoxin] + H2O. It carries out the reaction (22R)-hydroxycholesterol + 2 reduced [adrenodoxin] + O2 + 2 H(+) = (20R,22R)-20,22-dihydroxycholesterol + 2 oxidized [adrenodoxin] + H2O. The enzyme catalyses (20R,22R)-20,22-dihydroxycholesterol + 2 reduced [adrenodoxin] + O2 + 2 H(+) = 4-methylpentanal + pregnenolone + 2 oxidized [adrenodoxin] + 2 H2O. The protein operates within lipid metabolism; C21-steroid hormone metabolism. Its pathway is steroid metabolism; cholesterol metabolism. Its function is as follows. A cytochrome P450 monooxygenase that catalyzes the side-chain hydroxylation and cleavage of cholesterol to pregnenolone, the precursor of most steroid hormones. Catalyzes three sequential oxidation reactions of cholesterol, namely the hydroxylation at C22 followed with the hydroxylation at C20 to yield 20R,22R-hydroxycholesterol that is further cleaved between C20 and C22 to yield the C21-steroid pregnenolone and 4-methylpentanal. Mechanistically, uses molecular oxygen inserting one oxygen atom into a substrate and reducing the second into a water molecule. Two electrons are provided by NADPH via a two-protein mitochondrial transfer system comprising flavoprotein FDXR (adrenodoxin/ferredoxin reductase) and nonheme iron-sulfur protein FDX1 or FDX2 (adrenodoxin/ferredoxin). In Mesocricetus auratus (Golden hamster), this protein is Cholesterol side-chain cleavage enzyme, mitochondrial (CYP11A1).